A 339-amino-acid polypeptide reads, in one-letter code: Ketol-acid reductoisomerase (NADP(+)) (339 aa).

Positions 1–182 (MRVYYDRDAD…GGGRAGVIET (182 aa)) constitute a KARI N-terminal Rossmann domain. NADP(+) is bound by residues 24-27 (YGSQ), R48, S51, T53, and 83-86 (DELQ). H108 is an active-site residue. Residue G134 coordinates NADP(+). A KARI C-terminal knotted domain is found at 183-328 (TFKEECETDL…EKLRAMMPWI (146 aa)). Mg(2+) is bound by residues D191, E195, E227, and E231. S252 contacts substrate.

This sequence belongs to the ketol-acid reductoisomerase family. Mg(2+) serves as cofactor.

It carries out the reaction (2R)-2,3-dihydroxy-3-methylbutanoate + NADP(+) = (2S)-2-acetolactate + NADPH + H(+). It catalyses the reaction (2R,3R)-2,3-dihydroxy-3-methylpentanoate + NADP(+) = (S)-2-ethyl-2-hydroxy-3-oxobutanoate + NADPH + H(+). It participates in amino-acid biosynthesis; L-isoleucine biosynthesis; L-isoleucine from 2-oxobutanoate: step 2/4. The protein operates within amino-acid biosynthesis; L-valine biosynthesis; L-valine from pyruvate: step 2/4. Its function is as follows. Involved in the biosynthesis of branched-chain amino acids (BCAA). Catalyzes an alkyl-migration followed by a ketol-acid reduction of (S)-2-acetolactate (S2AL) to yield (R)-2,3-dihydroxy-isovalerate. In the isomerase reaction, S2AL is rearranged via a Mg-dependent methyl migration to produce 3-hydroxy-3-methyl-2-ketobutyrate (HMKB). In the reductase reaction, this 2-ketoacid undergoes a metal-dependent reduction by NADPH to yield (R)-2,3-dihydroxy-isovalerate. This Xanthobacter autotrophicus (strain ATCC BAA-1158 / Py2) protein is Ketol-acid reductoisomerase (NADP(+)).